The chain runs to 154 residues: MPLLLSGQKFRTDLESFGCLAILSPLEGGAETRLLRRLRASGYQTQVTSARGLGDPVVFLTQLHGIRPPHLGHQNVGRNGALGEVQQVIPQLNELLVEDKPLVLWLLEGQVLSKSELLAINNLCQKEPRIKIVIEMGGARSIKWQPLNEFINKD.

It belongs to the complex I NdhN subunit family. As to quaternary structure, NDH-1 can be composed of about 15 different subunits; different subcomplexes with different compositions have been identified which probably have different functions.

The protein localises to the cellular thylakoid membrane. The catalysed reaction is a plastoquinone + NADH + (n+1) H(+)(in) = a plastoquinol + NAD(+) + n H(+)(out). It carries out the reaction a plastoquinone + NADPH + (n+1) H(+)(in) = a plastoquinol + NADP(+) + n H(+)(out). Functionally, NDH-1 shuttles electrons from an unknown electron donor, via FMN and iron-sulfur (Fe-S) centers, to quinones in the respiratory and/or the photosynthetic chain. The immediate electron acceptor for the enzyme in this species is believed to be plastoquinone. Couples the redox reaction to proton translocation, and thus conserves the redox energy in a proton gradient. Cyanobacterial NDH-1 also plays a role in inorganic carbon-concentration. The sequence is that of NAD(P)H-quinone oxidoreductase subunit N from Prochlorococcus marinus (strain NATL2A).